Reading from the N-terminus, the 266-residue chain is Undecaprenyl-diphosphatase (266 aa).

8 helical membrane passes run 4–24, 39–59, 88–108, 114–134, 147–167, 186–206, 214–234, and 246–266; these read ILRVIILGFVQGISEFLPISS, LPIVFDIYLHFATVLVVIIYY, LNLILLILIITFFTALIGIFI, LFTFKLVLFNFIVTSILLFLI, IFFSGLLIGIMQGIGAMPGIS, SLEISFLSLIPIVFGSLFLKY, IIFNIFEINLGAIFAFIFGLF, and SKLYYFSIYLVSVVSLVYFLV.

Belongs to the UppP family.

The protein localises to the cell inner membrane. The catalysed reaction is di-trans,octa-cis-undecaprenyl diphosphate + H2O = di-trans,octa-cis-undecaprenyl phosphate + phosphate + H(+). Catalyzes the dephosphorylation of undecaprenyl diphosphate (UPP). Confers resistance to bacitracin. This is Undecaprenyl-diphosphatase from Borrelia recurrentis (strain A1).